We begin with the raw amino-acid sequence, 366 residues long: MNINCSPLGFLISLFFIVTFLAPQVKSRAFFVFGDSLVDNGNNDYLVTTARADNYPYGIDYPTRRPTGRFSNGLNIPDIISEAIGMPSTLPYLSPHLTGENLLVGANFASAGIGILNDTGIQFVNIIRISKQMEYFEQYQLRVSALIGPEATQQLVNQALVLITLGGNDFVNNYYLIPFSARSRQYALPDYVVYLISEYGKILRKLYELGARRVLVTGTGAMGCAPAELAQHSRNGECYGALQTAAALFNPQLVDLIASVNAEIGQDVFVAANAYQMNMDYLSNPEQFGFVTSKVACCGQGPYNGIGLCTPVSNLCPNRDLYAFWDAFHPTEKANRIIVNQILTGSSKYMHPMNLSTAMLLDSSKI.

A signal peptide spans 1 to 27; that stretch reads MNINCSPLGFLISLFFIVTFLAPQVKS. Residue serine 36 is the Nucleophile of the active site. The N-linked (GlcNAc...) asparagine glycan is linked to asparagine 117. Catalysis depends on residues aspartate 326 and histidine 329. N-linked (GlcNAc...) asparagine glycosylation is present at asparagine 354.

It belongs to the 'GDSL' lipolytic enzyme family. As to quaternary structure, binds to VLG at the endomembrane system. As to expression, mostly expressed in flowers, reproductive stems and rosette leaves, and, to a lower extent, in roots.

The protein resides in the secreted. Involved in the mechanisms of salt tolerance. Mediates resistance to LiCl and NaCl. This Arabidopsis thaliana (Mouse-ear cress) protein is GDSL esterase/lipase LTL1.